Here is a 301-residue protein sequence, read N- to C-terminus: MLIAGPTASGKSALALKLAQASGGTVINTDSMQVYRDLRIITARPTPDEEALAPHRLYGTVDAAVNFSAGAYVEAAAVALAEVRVAGRLPILIGGTGLYFKALTRGLSAVPPVPAEVRDAVRLRLDRDGVQALHAELAGHDPEAAARLAPADRTRIARALEVVLATGRPLADWHQQTSPPLLPPDDVVAVFLAPDREALYARIDSRFAAMLQGGALNEVAALAERQLDPLLPAMKAHGVPALIRHLRGEITLEEAASIGAADTRHYAKRQFTWFRHQLPEFKWVRPQEADAFLNTVMPGRA.

5 to 12 lines the ATP pocket; it reads GPTASGKS. Substrate is bound at residue 7-12; it reads TASGKS. Residues 30-33 form an interaction with substrate tRNA region; sequence DSMQ.

This sequence belongs to the IPP transferase family. As to quaternary structure, monomer. Mg(2+) serves as cofactor.

The enzyme catalyses adenosine(37) in tRNA + dimethylallyl diphosphate = N(6)-dimethylallyladenosine(37) in tRNA + diphosphate. In terms of biological role, catalyzes the transfer of a dimethylallyl group onto the adenine at position 37 in tRNAs that read codons beginning with uridine, leading to the formation of N6-(dimethylallyl)adenosine (i(6)A). The protein is tRNA dimethylallyltransferase of Rhodopseudomonas palustris (strain TIE-1).